A 178-amino-acid polypeptide reads, in one-letter code: Bifunctional protein PyrR (178 aa).

A PRPP-binding motif is present at residues 99–111 (VILVDDVLFTGRT).

This sequence belongs to the purine/pyrimidine phosphoribosyltransferase family. PyrR subfamily. In terms of assembly, homodimer and homohexamer; in equilibrium.

The enzyme catalyses UMP + diphosphate = 5-phospho-alpha-D-ribose 1-diphosphate + uracil. Functionally, regulates transcriptional attenuation of the pyrimidine nucleotide (pyr) operon by binding in a uridine-dependent manner to specific sites on pyr mRNA. This disrupts an antiterminator hairpin in the RNA and favors formation of a downstream transcription terminator, leading to a reduced expression of downstream genes. Also displays a weak uracil phosphoribosyltransferase activity which is not physiologically significant. The chain is Bifunctional protein PyrR from Limosilactobacillus reuteri subsp. reuteri (strain JCM 1112) (Lactobacillus reuteri).